The chain runs to 258 residues: E3 ubiquitin-protein ligase RNF170 (258 aa).

The Lumenal segment spans residues 1–24 (MAKYQGEVQSLKLDDDSVIEGVSD). The helical transmembrane segment at 25–45 (QVLVAVVVSFALIATLVYALF) threads the bilayer. The Cytoplasmic segment spans residues 46–201 (RNVHQNIHPE…GGLFWMFRIR (156 aa)). Residues 87–130 (CPICLHQASFPVETNCGHLFCGACIIAYWRYGSWLGAISCPICR) form an RING-type zinc finger. Residues 202 to 222 (IILCLMGAFFYLISPLDFVPE) traverse the membrane as a helical segment. Position 223 (Ala-223) is a topological domain, lumenal. The chain crosses the membrane as a helical span at residues 224–244 (LFGILGFLDDFFVIFLLLIYI). Residues 245-258 (SIMYREVITQRLTR) lie on the Cytoplasmic side of the membrane.

In terms of assembly, (Microbial infection) Interacts with human cytomegalovirus protein NEC2/UL50; this interaction promotes of UBA7 ubiquitination and subsequent proteasomal degradation. Constitutively associated with the ERLIN1/ERLIN 2 complex. Interacts with activated ITPR1. In terms of tissue distribution, expressed in the spinal cord.

It is found in the endoplasmic reticulum membrane. The catalysed reaction is S-ubiquitinyl-[E2 ubiquitin-conjugating enzyme]-L-cysteine + [acceptor protein]-L-lysine = [E2 ubiquitin-conjugating enzyme]-L-cysteine + N(6)-ubiquitinyl-[acceptor protein]-L-lysine.. It functions in the pathway protein modification; protein ubiquitination. Functionally, E3 ubiquitin-protein ligase that plays an essential role in stimulus-induced inositol 1,4,5-trisphosphate receptor type 1 (ITPR1) ubiquitination and degradation via the endoplasmic reticulum-associated degradation (ERAD) pathway. Also involved in ITPR1 turnover in resting cells. Selectively inhibits the TLR3-triggered innate immune response by promoting the 'Lys-48'-linked polyubiquitination and degradation of TLR3. This is E3 ubiquitin-protein ligase RNF170 (RNF170) from Homo sapiens (Human).